The chain runs to 241 residues: Glutathione S-transferase omega-1 (241 aa).

N-acetylserine is present on Ser-2. A GST N-terminal domain is found at Gly-22–Lys-101. The active-site Nucleophile is Cys-32. Lys-57 is subject to N6-acetyllysine. Residues Lys-59, Val-72, and Glu-85–Ser-86 contribute to the glutathione site. Positions Asp-106 to Leu-230 constitute a GST C-terminal domain. Ser-129 is subject to Phosphoserine. N6-acetyllysine is present on residues Lys-143, Lys-148, and Lys-152.

The protein belongs to the GST superfamily. Omega family. As to quaternary structure, homodimer. In terms of tissue distribution, ubiquitous. Highest expression in liver, pancreas, skeletal muscle, spleen, thymus, colon, blood leukocyte and heart. Lowest expression in brain, placenta and lung.

It is found in the cytoplasm. The protein resides in the cytosol. It carries out the reaction RX + glutathione = an S-substituted glutathione + a halide anion + H(+). The catalysed reaction is L-dehydroascorbate + 2 glutathione = glutathione disulfide + L-ascorbate. The enzyme catalyses methylarsonate + 2 glutathione + H(+) = methylarsonous acid + glutathione disulfide + H2O. Monomethylarsonic acid reductase activity is competitively inhibited by 1-chloro 2,4-dinitrobenzene (CDNB) and by deoxycholate. In terms of biological role, exhibits glutathione-dependent thiol transferase and dehydroascorbate reductase activities. Has S-(phenacyl)glutathione reductase activity. Also has glutathione S-transferase activity. Participates in the biotransformation of inorganic arsenic and reduces monomethylarsonic acid (MMA) and dimethylarsonic acid. The chain is Glutathione S-transferase omega-1 (GSTO1) from Homo sapiens (Human).